A 63-amino-acid chain; its full sequence is DNA gyrase inhibitor YacG (63 aa).

Residues Cys-9, Cys-12, Cys-28, and Cys-32 each contribute to the Zn(2+) site.

Belongs to the DNA gyrase inhibitor YacG family. As to quaternary structure, interacts with GyrB. The cofactor is Zn(2+).

Its function is as follows. Inhibits all the catalytic activities of DNA gyrase by preventing its interaction with DNA. Acts by binding directly to the C-terminal domain of GyrB, which probably disrupts DNA binding by the gyrase. The polypeptide is DNA gyrase inhibitor YacG (Salmonella choleraesuis (strain SC-B67)).